A 647-amino-acid polypeptide reads, in one-letter code: Carboxypeptidase Z (647 aa).

An N-terminal signal peptide occupies residues 1–18; the sequence is MVPSLLLLLTGLFRATEP. One can recognise an FZ domain in the interval 35-157; sequence AQKAKCVDIS…AGEEEGCFDP (123 aa). 5 disulfides stabilise this stretch: Cys40–Cys106, Cys48–Cys99, Cys90–Cys126, Cys115–Cys154, and Cys119–Cys143. One can recognise a Peptidase M14 domain in the interval 183–499; it reads KHHSYSQMVS…DALLNYMEMV (317 aa). Residues His245 and Glu248 each coordinate Zn(2+). Asn278 carries N-linked (GlcNAc...) asparagine glycosylation. His377 lines the Zn(2+) pocket. Catalysis depends on Glu469, which acts as the Proton donor/acceptor.

It belongs to the peptidase M14 family. Interacts with WNT4 vie its FZ domain. Zn(2+) serves as cofactor. As to expression, in the early embryo it is initially expressed throughout the somites and subsequently becomes restricted to the sclerotome. Expressed in somites, paraxial head mesoderm and apical ectodermal ridge.

It is found in the secreted. The protein localises to the extracellular space. The protein resides in the extracellular matrix. Inhibited by 2-mercaptomethyl-3-guanidinoethylthiopropanoic acid (MGTA) and guanidinoethylmercaptosuccinic acid (GEMSA). Inhibited by chelating agents such as EDTA and EGTA. In terms of biological role, cleaves substrates with C-terminal arginine residues. Modulates the Wnt signaling pathway, probably by cleaving some undefined protein. Regulates the development of skeletal elements during development, probably by activating WNT4. This is Carboxypeptidase Z (CPZ) from Gallus gallus (Chicken).